The following is a 675-amino-acid chain: Putative elongation factor TypA-like SVR3, chloroplastic (675 aa).

A chloroplast-targeting transit peptide spans 1-58 (MELSLSTSSASPAVLRRQASPLLHKQQVLGVSFASALKPGGGALRFPSRRPLPRPITC). The interval 43–76 (ALRFPSRRPLPRPITCSASPSTAEPASEVKKKQL) is disordered. The segment covering 59-68 (SASPSTAEPA) has biased composition (low complexity). Residues 80-275 (DNVRNIAIVA…AIIRCVPGPN (196 aa)) form the tr-type G domain.

This sequence belongs to the TRAFAC class translation factor GTPase superfamily. Classic translation factor GTPase family. BipA subfamily.

The protein resides in the plastid. It is found in the chloroplast. Its function is as follows. Putative chloroplastic elongation factor involved in response to chilling stress. Required for proper chloroplast rRNA processing and/or translation at low temperature. Involved in plastid protein homeostasis. This Arabidopsis thaliana (Mouse-ear cress) protein is Putative elongation factor TypA-like SVR3, chloroplastic (SVR3).